A 272-amino-acid polypeptide reads, in one-letter code: Ribosomal RNA small subunit methyltransferase A (272 aa).

Asn18, Leu20, Gly45, Glu66, Asp91, and Asn113 together coordinate S-adenosyl-L-methionine.

The protein belongs to the class I-like SAM-binding methyltransferase superfamily. rRNA adenine N(6)-methyltransferase family. RsmA subfamily.

Its subcellular location is the cytoplasm. The catalysed reaction is adenosine(1518)/adenosine(1519) in 16S rRNA + 4 S-adenosyl-L-methionine = N(6)-dimethyladenosine(1518)/N(6)-dimethyladenosine(1519) in 16S rRNA + 4 S-adenosyl-L-homocysteine + 4 H(+). Functionally, specifically dimethylates two adjacent adenosines (A1518 and A1519) in the loop of a conserved hairpin near the 3'-end of 16S rRNA in the 30S particle. May play a critical role in biogenesis of 30S subunits. The protein is Ribosomal RNA small subunit methyltransferase A of Pectobacterium atrosepticum (strain SCRI 1043 / ATCC BAA-672) (Erwinia carotovora subsp. atroseptica).